Reading from the N-terminus, the 116-residue chain is Protein Rev (116 aa).

Ser5 carries the phosphoserine; by host CK2 modification. Residues 18–26 (YIKILYQSN) are homomultimerization. A Nuclear localization signal and RNA-binding (RRE) motif is present at residues 34–50 (TRKARRNRRRRWRARQR). Residues 73-84 (LQLPLLEKLHIN) carry the Nuclear export signal and binding to XPO1 motif. The disordered stretch occupies residues 90–116 (GQGTEKGVGSPQISVESRAVLGSGTKE). Phosphoserine; by host is present on Ser99.

This sequence belongs to the HIV-1 REV protein family. In terms of assembly, homomultimer; when bound to the RRE. Multimeric assembly is essential for activity and may involve XPO1. Binds to human KPNB1, XPO1, TNPO1, RANBP5 and IPO7. Interacts with the viral Integrase. Interacts with human KHDRBS1. Interacts with human NAP1; this interaction decreases Rev multimerization and stimulates its activity. Interacts with human DEAD-box helicases DDX3 and DDX24; these interactions may serve for viral RNA export to the cytoplasm and packaging, respectively. Interacts with human PSIP1; this interaction may inhibit HIV-1 DNA integration by promoting dissociation of the Integrase-LEDGF/p75 complex. Asymmetrically arginine dimethylated at one site by host PRMT6. Methylation impairs the RNA-binding activity and export of viral RNA from the nucleus to the cytoplasm. Post-translationally, phosphorylated by protein kinase CK2. Presence of, and maybe binding to the N-terminus of the regulatory beta subunit of CK2 is necessary for CK2-mediated Rev's phosphorylation.

Its subcellular location is the host nucleus. It is found in the host nucleolus. The protein resides in the host cytoplasm. Escorts unspliced or incompletely spliced viral pre-mRNAs (late transcripts) out of the nucleus of infected cells. These pre-mRNAs carry a recognition sequence called Rev responsive element (RRE) located in the env gene, that is not present in fully spliced viral mRNAs (early transcripts). This function is essential since most viral proteins are translated from unspliced or partially spliced pre-mRNAs which cannot exit the nucleus by the pathway used by fully processed cellular mRNAs. Rev itself is translated from a fully spliced mRNA that readily exits the nucleus. Rev's nuclear localization signal (NLS) binds directly to KPNB1/Importin beta-1 without previous binding to KPNA1/Importin alpha-1. KPNB1 binds to the GDP bound form of RAN (Ran-GDP) and targets Rev to the nucleus. In the nucleus, the conversion from Ran-GDP to Ran-GTP dissociates Rev from KPNB1 and allows Rev's binding to the RRE in viral pre-mRNAs. Rev multimerization on the RRE via cooperative assembly exposes its nuclear export signal (NES) to the surface. Rev can then form a complex with XPO1/CRM1 and Ran-GTP, leading to nuclear export of the complex. Conversion from Ran-GTP to Ran-GDP mediates dissociation of the Rev/RRE/XPO1/RAN complex, so that Rev can return to the nucleus for a subsequent round of export. Beside KPNB1, also seems to interact with TNPO1/Transportin-1, RANBP5/IPO5 and IPO7/RANBP7 for nuclear import. The nucleoporin-like HRB/RIP is an essential cofactor that probably indirectly interacts with Rev to release HIV RNAs from the perinuclear region to the cytoplasm. The sequence is that of Protein Rev from Human immunodeficiency virus type 1 group M subtype F2 (isolate MP257) (HIV-1).